Reading from the N-terminus, the 90-residue chain is uncharacterized protein (90 aa).

Residues Met1–Ser18 form the signal peptide. Residues Gln28–Pro50 are disordered.

Its subcellular location is the secreted. This is an uncharacterized protein from Homo sapiens (Human).